A 248-amino-acid chain; its full sequence is tRNA (guanine-N(1)-)-methyltransferase (248 aa).

S-adenosyl-L-methionine is bound by residues Gly-113 and Ile-133 to Leu-138.

The protein belongs to the RNA methyltransferase TrmD family. In terms of assembly, homodimer.

It localises to the cytoplasm. The enzyme catalyses guanosine(37) in tRNA + S-adenosyl-L-methionine = N(1)-methylguanosine(37) in tRNA + S-adenosyl-L-homocysteine + H(+). Specifically methylates guanosine-37 in various tRNAs. The chain is tRNA (guanine-N(1)-)-methyltransferase from Dehalococcoides mccartyi (strain ATCC BAA-2266 / KCTC 15142 / 195) (Dehalococcoides ethenogenes (strain 195)).